Here is a 262-residue protein sequence, read N- to C-terminus: tRNA pseudouridine synthase A (262 aa).

Catalysis depends on Asp-51, which acts as the Nucleophile. Substrate is bound at residue Tyr-109.

It belongs to the tRNA pseudouridine synthase TruA family. Homodimer.

It carries out the reaction uridine(38/39/40) in tRNA = pseudouridine(38/39/40) in tRNA. Formation of pseudouridine at positions 38, 39 and 40 in the anticodon stem and loop of transfer RNAs. The protein is tRNA pseudouridine synthase A of Glaesserella parasuis serovar 5 (strain SH0165) (Haemophilus parasuis).